We begin with the raw amino-acid sequence, 149 residues long: Calmodulin (149 aa).

Residue Ala-2 is modified to N-acetylalanine. 4 consecutive EF-hand domains span residues 8-43 (EQVS…LGQN), 44-79 (PSES…KMKD), 81-116 (DSEE…IGEK), and 117-149 (LTDD…MMQK). Residues Asp-21, Asp-23, Asp-25, Gln-27, Glu-32, Asp-57, Asp-59, Asn-61, Thr-63, Glu-68, Asp-94, Asp-96, Asn-98, Glu-105, Asp-130, Asp-132, Asp-134, Arg-136, and Glu-141 each coordinate Ca(2+).

It belongs to the calmodulin family.

Functionally, calmodulin mediates the control of a large number of enzymes, ion channels and other proteins by Ca(2+). Among the enzymes to be stimulated by the calmodulin-Ca(2+) complex are a number of protein kinases and phosphatases. This Emericella nidulans (strain FGSC A4 / ATCC 38163 / CBS 112.46 / NRRL 194 / M139) (Aspergillus nidulans) protein is Calmodulin (camA).